Consider the following 444-residue polypeptide: Serine carboxypeptidase 2 (444 aa).

60-62 is a substrate binding site; sequence NGG. 3 disulfides stabilise this stretch: cysteine 65/cysteine 324, cysteine 222/cysteine 234, and cysteine 258/cysteine 291. 2 N-linked (GlcNAc...) asparagine glycosylation sites follow: asparagine 116 and asparagine 127. A substrate-binding site is contributed by 157–159; sequence ESY. Serine 158 is a catalytic residue. Asparagine 259 carries N-linked (GlcNAc...) asparagine glycosylation. Residues 260–286 constitute a propeptide, linker peptide; that stretch reads ITSSSSSSSSSLSQQRRSRGRYPWLTG. N-linked (GlcNAc...) asparagine glycosylation is found at asparagine 312 and asparagine 318. Active-site residues include aspartate 361 and histidine 413. 409-413 lines the substrate pocket; sequence RGAGH.

This sequence belongs to the peptidase S10 family. In terms of assembly, carboxypeptidase II is a dimer, where each monomer is composed of two chains linked by a disulfide bond. In terms of processing, N-glycosylated.

The enzyme catalyses Preferential release of a C-terminal arginine or lysine residue.. The sequence is that of Serine carboxypeptidase 2 (CBP2) from Triticum aestivum (Wheat).